A 1089-amino-acid chain; its full sequence is Ankyrin repeat and IBR domain-containing protein 1 (1089 aa).

A lipid anchor (N-myristoyl glycine) is attached at G2. ANK repeat units lie at residues 45–74 (QHNT…NPNK) and 144–173 (KKNT…DLFA). The segment at 281-321 (CQRSGVQMPTPPPSGYNAWDTLPSPRTPRTTRSSVTSPDEI) is disordered. The span at 303 to 318 (PSPRTPRTTRSSVTSP) shows a compositional bias: low complexity. The segment at 329–569 (DTSLCDICMC…GGYYRCTRYE (241 aa)) is TRIAD supradomain. 14 residues coordinate Zn(2+): C333, C336, C351, H353, C356, C359, C378, C383, C465, C468, H473, C478, C519, and C522. Residues 333–383 (CDICMCSISVFEDPVDMPCGHDFCRGCWESFLNLKIQEGEAHNIFCPAYDC) form an RING-type 1 zinc finger. The segment at 401 to 478 (DKRYLQFDIK…LGEAHEPCDC (78 aa)) adopts an IBR-type zinc-finger fold. The RING-type 2; atypical zinc finger occupies 519–548 (CANCKSPIQKNEGCNHMQCAKCKYDFCWIC). C532 is an active-site residue. Residues C537, C540, C545, C548, H555, and C565 each contribute to the Zn(2+) site. Residues 575-640 (EEQSKEMTVE…RALKETEGGC (66 aa)) adopt a coiled-coil conformation. At S737 the chain carries Phosphoserine. A disordered region spans residues 776 to 821 (RRGDVHSLLSNPPDPDEPSESTLDIPEGGSSSRRPGTSVVSSASMS). Positions 851–870 (EDDPNILLAIQLSLQESGLA) constitute a UIM domain. Phosphoserine occurs at positions 884 and 911. Disordered regions lie at residues 889 to 912 (GTSL…ALSS), 927 to 964 (AEND…QDPN), and 1026 to 1089 (DASV…VHLV). Composition is skewed to polar residues over residues 931–941 (PFSTDTLSSHP) and 1070–1082 (DVSS…SSDW).

The protein belongs to the RBR family.

The catalysed reaction is [E2 ubiquitin-conjugating enzyme]-S-ubiquitinyl-L-cysteine + [acceptor protein]-L-lysine = [E2 ubiquitin-conjugating enzyme]-L-cysteine + [acceptor protein]-N(6)-ubiquitinyl-L-lysine.. Might act as an E3 ubiquitin-protein ligase, or as part of E3 complex, which accepts ubiquitin from specific E2 ubiquitin-conjugating enzymes and then transfers it to substrates. The protein is Ankyrin repeat and IBR domain-containing protein 1 (ANKIB1) of Homo sapiens (Human).